The chain runs to 260 residues: 3'-5' ssDNA/RNA exonuclease TatD (260 aa).

A divalent metal cation-binding residues include Glu91, His127, and His152.

It belongs to the metallo-dependent hydrolases superfamily. TatD-type hydrolase family. TatD subfamily. Monomer. It depends on Mg(2+) as a cofactor.

It is found in the cytoplasm. Functionally, 3'-5' exonuclease that prefers single-stranded DNA and RNA. May play a role in the H(2)O(2)-induced DNA damage repair. The chain is 3'-5' ssDNA/RNA exonuclease TatD from Escherichia fergusonii (strain ATCC 35469 / DSM 13698 / CCUG 18766 / IAM 14443 / JCM 21226 / LMG 7866 / NBRC 102419 / NCTC 12128 / CDC 0568-73).